The sequence spans 78 residues: Large ribosomal subunit protein bL28 (78 aa).

Belongs to the bacterial ribosomal protein bL28 family.

This is Large ribosomal subunit protein bL28 from Synechococcus sp. (strain CC9311).